A 341-amino-acid chain; its full sequence is Uroporphyrinogen decarboxylase (341 aa).

Substrate is bound by residues 26–30 (RQAGR), Asp-75, Tyr-150, Ser-205, and His-318.

This sequence belongs to the uroporphyrinogen decarboxylase family. As to quaternary structure, homodimer.

The protein resides in the cytoplasm. The enzyme catalyses uroporphyrinogen III + 4 H(+) = coproporphyrinogen III + 4 CO2. It functions in the pathway porphyrin-containing compound metabolism; protoporphyrin-IX biosynthesis; coproporphyrinogen-III from 5-aminolevulinate: step 4/4. In terms of biological role, catalyzes the decarboxylation of four acetate groups of uroporphyrinogen-III to yield coproporphyrinogen-III. The polypeptide is Uroporphyrinogen decarboxylase (Thermus thermophilus (strain ATCC 27634 / DSM 579 / HB8)).